We begin with the raw amino-acid sequence, 283 residues long: Small ribosomal subunit protein uS2 (283 aa).

Positions 229-283 (RSAGKSGEQPAEAEPMPDWERELLEGDGAKTEAKAEEPKAEAKKADEAPEAEKSN) are disordered. Residues 246-283 (DWERELLEGDGAKTEAKAEEPKAEAKKADEAPEAEKSN) show a composition bias toward basic and acidic residues.

This sequence belongs to the universal ribosomal protein uS2 family.

In Cutibacterium acnes (strain DSM 16379 / KPA171202) (Propionibacterium acnes), this protein is Small ribosomal subunit protein uS2.